The chain runs to 239 residues: Ribonuclease 3 (239 aa).

Residues 11–133 form the RNase III domain; it reads HAAIQKKLGY…MFAAVSFDAD (123 aa). Glu46 lines the Mg(2+) pocket. Residue Asp50 is part of the active site. Mg(2+)-binding residues include Asp119 and Glu122. Residue Glu122 is part of the active site. One can recognise a DRBM domain in the interval 160–230; that stretch reads DGKTALQEAL…AKEALKWLEE (71 aa).

This sequence belongs to the ribonuclease III family. Homodimer. It depends on Mg(2+) as a cofactor.

The protein localises to the cytoplasm. The catalysed reaction is Endonucleolytic cleavage to 5'-phosphomonoester.. Functionally, digests double-stranded RNA. Involved in the processing of primary rRNA transcript to yield the immediate precursors to the large and small rRNAs (23S and 16S). Also processes some mRNAs, and tRNAs when they are encoded in the rRNA operon. In terms of biological role, CRISPR (clustered regularly interspaced short palindromic repeat) is an adaptive immune system that provides protection against mobile genetic elements (viruses, transposable elements and conjugative plasmids). CRISPR clusters contain spacers, sequences complementary to antecedent mobile elements, and target invading nucleic acids. CRISPR clusters are transcribed and processed into CRISPR RNA (crRNA). In this organism endogenous ribonuclease 3 and Cas9 are required for correct coprocessing of pre-crRNA and the trans-encoded small RNA (tracrRNA). Cas9, crRNA and tracrRNA are required for cleavage of invading DNA. Complements pre-crRNA and tracrRNA coprocessing defects in an rnc deletion in S.pyogenes strain 370. The chain is Ribonuclease 3 from Neisseria meningitidis serogroup A / serotype 4A (strain DSM 15465 / Z2491).